The chain runs to 296 residues: Diheme cytochrome c-type (296 aa).

Residues cysteine 52, cysteine 55, histidine 56, cysteine 202, cysteine 205, and histidine 206 each coordinate heme c.

In terms of processing, binds 2 heme c groups covalently per subunit.

The protein resides in the cell membrane. Particularly expressed when cells generate energy via aerobic respiration. This Cereibacter sphaeroides (strain ATCC 17023 / DSM 158 / JCM 6121 / CCUG 31486 / LMG 2827 / NBRC 12203 / NCIMB 8253 / ATH 2.4.1.) (Rhodobacter sphaeroides) protein is Diheme cytochrome c-type (cycG).